A 428-amino-acid polypeptide reads, in one-letter code: Enolase (428 aa).

Residue Gln-163 coordinates (2R)-2-phosphoglycerate. Glu-205 functions as the Proton donor in the catalytic mechanism. Residues Asp-242, Glu-286, and Asp-313 each contribute to the Mg(2+) site. Positions 338, 367, 368, and 389 each coordinate (2R)-2-phosphoglycerate. Lys-338 (proton acceptor) is an active-site residue.

It belongs to the enolase family. Mg(2+) serves as cofactor.

It localises to the cytoplasm. Its subcellular location is the secreted. The protein resides in the cell surface. The catalysed reaction is (2R)-2-phosphoglycerate = phosphoenolpyruvate + H2O. It participates in carbohydrate degradation; glycolysis; pyruvate from D-glyceraldehyde 3-phosphate: step 4/5. Its function is as follows. Catalyzes the reversible conversion of 2-phosphoglycerate (2-PG) into phosphoenolpyruvate (PEP). It is essential for the degradation of carbohydrates via glycolysis. The protein is Enolase of Verminephrobacter eiseniae (strain EF01-2).